A 292-amino-acid polypeptide reads, in one-letter code: Elongation factor Ts (292 aa).

The involved in Mg(2+) ion dislocation from EF-Tu stretch occupies residues 80-83 (TDFV).

Belongs to the EF-Ts family.

The protein localises to the cytoplasm. Its function is as follows. Associates with the EF-Tu.GDP complex and induces the exchange of GDP to GTP. It remains bound to the aminoacyl-tRNA.EF-Tu.GTP complex up to the GTP hydrolysis stage on the ribosome. The sequence is that of Elongation factor Ts from Cupriavidus taiwanensis (strain DSM 17343 / BCRC 17206 / CCUG 44338 / CIP 107171 / LMG 19424 / R1) (Ralstonia taiwanensis (strain LMG 19424)).